A 402-amino-acid chain; its full sequence is CinA-like protein (402 aa).

It belongs to the CinA family.

The protein is CinA-like protein of Escherichia coli O17:K52:H18 (strain UMN026 / ExPEC).